The primary structure comprises 341 residues: Elongation factor Ts (341 aa).

The interval 80–83 (TDFV) is involved in Mg(2+) ion dislocation from EF-Tu.

This sequence belongs to the EF-Ts family.

Its subcellular location is the cytoplasm. Its function is as follows. Associates with the EF-Tu.GDP complex and induces the exchange of GDP to GTP. It remains bound to the aminoacyl-tRNA.EF-Tu.GTP complex up to the GTP hydrolysis stage on the ribosome. This chain is Elongation factor Ts, found in Lactobacillus johnsonii (strain CNCM I-12250 / La1 / NCC 533).